The sequence spans 575 residues: CCR4-NOT transcription complex subunit 4 (575 aa).

The RING-type; degenerate zinc finger occupies 14-57 (CPLCMEPLEIDDINFFPCTCGYQICRFCWHRIRTDENGLCPACR). Residues 68–104 (KPLSQEELQRIKNEKKQKQNERKQKISENRKHLASVR) are a coiled coil. Residue Ser-71 is modified to Phosphoserine. The RRM domain occupies 109-189 (NLVFVVGLSQ…VVDGRTLKAS (81 aa)). The segment at 190–217 (LGTTKYCSYFLKNMQCPKPDCMYLHELG) adopts a C3H1-type zinc-finger fold. Disordered regions lie at residues 256 to 372 (TGSV…EPQS) and 424 to 458 (SVQDQPSLSPTSLQNSSSHTTTAKGPGSGFLHPAA). A compositionally biased stretch (polar residues) spans 281–299 (DSLSIGNGDNSQQISNSDT). The residue at position 301 (Ser-301) is a Phosphoserine. Polar residues predominate over residues 307–322 (SKSNPVIPISSSNHSA). Ser-324 carries the phosphoserine modification. Positions 345–356 (NPIPSGLPPFPS) are enriched in pro residues. Over residues 428–441 (QPSLSPTSLQNSSS) the composition is skewed to low complexity. Phosphoserine is present on Ser-432. Asymmetric dimethylarginine is present on residues Arg-475 and Arg-483. Ser-490 carries the post-translational modification Phosphoserine. The residue at position 497 (Arg-497) is an Asymmetric dimethylarginine. Residues 553–575 (PLSTSSHSLQQGQQPTSLHTTVA) are disordered.

As to quaternary structure, interacts with CNOT1 via its C-terminus but does not stably associate with the CCR4-NOT complex. Interacts (via RING domain) with UBE2D2. Interacts with ABCE1, PINK1 and PELO. In terms of processing, autoubiquitinated.

Its subcellular location is the cytoplasm. It localises to the nucleus. The catalysed reaction is S-ubiquitinyl-[E2 ubiquitin-conjugating enzyme]-L-cysteine + [acceptor protein]-L-lysine = [E2 ubiquitin-conjugating enzyme]-L-cysteine + N(6)-ubiquitinyl-[acceptor protein]-L-lysine.. It functions in the pathway protein modification; protein ubiquitination. Its function is as follows. Has E3 ubiquitin ligase activity, promoting ubiquitination and degradation of target proteins. Involved in activation of the JAK/STAT pathway. Catalyzes ubiquitination of methylated RBM15. Plays a role in quality control of translation of mitochondrial outer membrane-localized mRNA. As part of the PINK1-regulated signaling, upon mitochondria damage, ubiquitinates ABCE1 and thereby recruits autophagy receptors to the mitochondrial outer membrane to initiate mitophagy. The sequence is that of CCR4-NOT transcription complex subunit 4 (CNOT4) from Homo sapiens (Human).